The chain runs to 527 residues: MTNQAAEVAKRRTFAIISHPDAGKTTITEKLLLMGKAIAVAGTVKSRKSDRHATSDWMEMEKQRGISITTSVMQFPYREHMINLLDTPGHEDFSEDTYRTLTAVDSALMVLDGGKGVEPRTIALMDVCRLRDTPIVSFINKLDRDIRDPIELLDEIEAVLKIKAAPITWPIGCYRDFKGVYHLTGDYIVVYTPGHGHERTEAKIIQKLDSDEARAHLGDQYDSFVEQLELVQGACHEFNQEEFINGQLTPVFFGTALGNFGVDHVLDAVVDWAPRPLGRVAHERTVEPVEEKFTGFVFKIQANMDPKHRDRIAFMRICSGKYEKGMKMRHVRLNKDLRIGDALTFFSSEREQLEEAFAGDIIGLHNHGTIQIGDTFTEGEALGFTGIPHFAPELFRRVRLKDPLKSKQLRQGLQQLAEEGATQVFFPERSNDIILGAVGVLQFDVVASRLKEEYKVECAYEPITVWSARWISCDDKKKLEEFQTKAMENLAIDGGGHLTYLAPTRVNLALMEERWPDIKFRATREHH.

A tr-type G domain is found at 9 to 277 (AKRRTFAIIS…AVVDWAPRPL (269 aa)). GTP-binding positions include 18–25 (SHPDAGKT), 86–90 (DTPGH), and 140–143 (NKLD).

The protein belongs to the TRAFAC class translation factor GTPase superfamily. Classic translation factor GTPase family. PrfC subfamily.

Its subcellular location is the cytoplasm. In terms of biological role, increases the formation of ribosomal termination complexes and stimulates activities of RF-1 and RF-2. It binds guanine nucleotides and has strong preference for UGA stop codons. It may interact directly with the ribosome. The stimulation of RF-1 and RF-2 is significantly reduced by GTP and GDP, but not by GMP. This Pseudomonas putida (strain ATCC 47054 / DSM 6125 / CFBP 8728 / NCIMB 11950 / KT2440) protein is Peptide chain release factor 3.